Consider the following 99-residue polypeptide: Integration host factor subunit alpha (99 aa).

The disordered stretch occupies residues 49 to 72; that stretch reads FGNFDLRDKNQRPGRNPKTGEDIP.

The protein belongs to the bacterial histone-like protein family. In terms of assembly, heterodimer of an alpha and a beta chain.

In terms of biological role, this protein is one of the two subunits of integration host factor, a specific DNA-binding protein that functions in genetic recombination as well as in transcriptional and translational control. The chain is Integration host factor subunit alpha from Escherichia coli O9:H4 (strain HS).